The chain runs to 262 residues: Sperm microtubule inner protein 6 (262 aa).

It belongs to the SPMIP6 family. In terms of assembly, microtubule inner protein component of sperm flagellar doublet microtubules. Interacts with alpha-tubulin. Expressed in testis. Strongly expressed in ciliated epithelial cells with lower levels in goblet cells (at protein level).

The protein localises to the cytoplasm. The protein resides in the cytoskeleton. It is found in the nucleus. It localises to the mitochondrion. Its subcellular location is the flagellum axoneme. Functionally, may participate in intramanchette transport and midpiece formation of the sperm tail. May play a potential role in somatic cell proliferation. The sequence is that of Sperm microtubule inner protein 6 from Homo sapiens (Human).